A 1155-amino-acid polypeptide reads, in one-letter code: DNA-directed RNA polymerase subunit beta (1155 aa).

It belongs to the RNA polymerase beta chain family. As to quaternary structure, the RNAP catalytic core consists of 2 alpha, 1 beta, 1 beta' and 1 omega subunit. When a sigma factor is associated with the core the holoenzyme is formed, which can initiate transcription.

It catalyses the reaction RNA(n) + a ribonucleoside 5'-triphosphate = RNA(n+1) + diphosphate. Functionally, DNA-dependent RNA polymerase catalyzes the transcription of DNA into RNA using the four ribonucleoside triphosphates as substrates. This is DNA-directed RNA polymerase subunit beta from Borrelia turicatae (strain 91E135).